The sequence spans 229 residues: Cytidylate kinase (229 aa).

12-20 (GPSGAGKGT) is a binding site for ATP.

This sequence belongs to the cytidylate kinase family. Type 1 subfamily.

It localises to the cytoplasm. It carries out the reaction CMP + ATP = CDP + ADP. The catalysed reaction is dCMP + ATP = dCDP + ADP. The protein is Cytidylate kinase of Pseudomonas aeruginosa (strain LESB58).